Consider the following 385-residue polypeptide: Putative glutamate--cysteine ligase 2 (385 aa).

Belongs to the glutamate--cysteine ligase type 2 family. YbdK subfamily.

The enzyme catalyses L-cysteine + L-glutamate + ATP = gamma-L-glutamyl-L-cysteine + ADP + phosphate + H(+). In terms of biological role, ATP-dependent carboxylate-amine ligase which exhibits weak glutamate--cysteine ligase activity. In Herpetosiphon aurantiacus (strain ATCC 23779 / DSM 785 / 114-95), this protein is Putative glutamate--cysteine ligase 2.